The sequence spans 162 residues: Endoribonuclease YbeY (162 aa).

Positions 128, 132, and 138 each coordinate Zn(2+).

Belongs to the endoribonuclease YbeY family. Zn(2+) is required as a cofactor.

Its subcellular location is the cytoplasm. In terms of biological role, single strand-specific metallo-endoribonuclease involved in late-stage 70S ribosome quality control and in maturation of the 3' terminus of the 16S rRNA. The sequence is that of Endoribonuclease YbeY from Levilactobacillus brevis (strain ATCC 367 / BCRC 12310 / CIP 105137 / JCM 1170 / LMG 11437 / NCIMB 947 / NCTC 947) (Lactobacillus brevis).